We begin with the raw amino-acid sequence, 507 residues long: Dihydrolipoyllysine-residue acetyltransferase component of pyruvate dehydrogenase complex, mitochondrial (507 aa).

The Lipoyl-binding domain occupies 77–153; it reads HNRVALPALS…PIGKLLCIIV (77 aa). At lysine 118 the chain carries N6-lipoyllysine. Disordered regions lie at residues 168-223 and 248-270; these read DGAS…VSAS and RILA…TQAV. The 38-residue stretch at 221–258 folds into the Peripheral subunit-binding (PSBD) domain; that stretch reads SASPFAKKLAAENGLDLSGVSGSGPGGRILASDLSQAP. Active-site residues include histidine 480 and aspartate 484.

Belongs to the 2-oxoacid dehydrogenase family. Requires (R)-lipoate as cofactor.

Its subcellular location is the mitochondrion matrix. It carries out the reaction N(6)-[(R)-dihydrolipoyl]-L-lysyl-[protein] + acetyl-CoA = N(6)-[(R)-S(8)-acetyldihydrolipoyl]-L-lysyl-[protein] + CoA. Its function is as follows. The pyruvate dehydrogenase complex catalyzes the overall conversion of pyruvate to acetyl-CoA and CO(2). It contains multiple copies of three enzymatic components: pyruvate dehydrogenase (E1), dihydrolipoamide acetyltransferase (E2) and lipoamide dehydrogenase (E3). This is Dihydrolipoyllysine-residue acetyltransferase component of pyruvate dehydrogenase complex, mitochondrial from Caenorhabditis elegans.